Here is a 265-residue protein sequence, read N- to C-terminus: Chlorophyll a-b binding protein 1C, chloroplastic (265 aa).

Residues 1-34 (MAAATMALSSPSFAGQAVKLSPSASEISGNGRIT) constitute a chloroplast transit peptide. A helical membrane pass occupies residues 151 to 171 (LVHAQSILAIWACQVVLMGAV). Chlorophyll b-binding residues include V152, S156, Q164, E172, R175, and L181. Residues K212, E213, N216, R218, Q230, H245, and A254 each coordinate chlorophyll a. The chain crosses the membrane as a helical span at residues 219 to 239 (LAMFSMFGFFVQAIVTGKGPL). A chlorophyll b-binding site is contributed by F261.

This sequence belongs to the light-harvesting chlorophyll a/b-binding (LHC) protein family. In terms of assembly, the LHC complex consists of chlorophyll a-b binding proteins. Binds at least 14 chlorophylls (8 Chl-a and 6 Chl-b) and carotenoids such as lutein and neoxanthin. serves as cofactor. Post-translationally, photoregulated by reversible phosphorylation of its threonine residues.

It localises to the plastid. The protein localises to the chloroplast thylakoid membrane. Its function is as follows. The light-harvesting complex (LHC) functions as a light receptor, it captures and delivers excitation energy to photosystems with which it is closely associated. This chain is Chlorophyll a-b binding protein 1C, chloroplastic (CAB1C), found in Solanum lycopersicum (Tomato).